We begin with the raw amino-acid sequence, 206 residues long: Small ribosomal subunit protein uS4 (206 aa).

In terms of domain architecture, S4 RNA-binding spans 96–156; it reads GRLDNVVYRM…EKAKKQSRVK (61 aa).

This sequence belongs to the universal ribosomal protein uS4 family. In terms of assembly, part of the 30S ribosomal subunit. Contacts protein S5. The interaction surface between S4 and S5 is involved in control of translational fidelity.

Functionally, one of the primary rRNA binding proteins, it binds directly to 16S rRNA where it nucleates assembly of the body of the 30S subunit. In terms of biological role, with S5 and S12 plays an important role in translational accuracy. The protein is Small ribosomal subunit protein uS4 of Yersinia enterocolitica serotype O:8 / biotype 1B (strain NCTC 13174 / 8081).